The chain runs to 150 residues: Urease accessory protein UreE (150 aa).

It belongs to the UreE family.

It localises to the cytoplasm. Its function is as follows. Involved in urease metallocenter assembly. Binds nickel. Probably functions as a nickel donor during metallocenter assembly. In Streptococcus vestibularis, this protein is Urease accessory protein UreE.